The chain runs to 245 residues: Adenylate kinase (245 aa).

Residue 15-20 (GSGKGT) participates in ATP binding. Positions 35–64 (SSGDLLRDAVSKDTPLSQEIKSYLDQGKLL) are NMP. AMP is bound by residues S36, R41, 62–64 (KLL), 103–106 (GFPR), and Q110. The interval 143–176 (SRYICPACQGIYNEQQGFSSCPKCSVELIRRSDD) is LID. Position 144 (R144) interacts with ATP. Zn(2+)-binding residues include C147 and C150. 153 to 154 (IY) serves as a coordination point for ATP. 2 residues coordinate Zn(2+): C163 and C166. AMP-binding residues include R173 and R184. A212 contributes to the ATP binding site.

This sequence belongs to the adenylate kinase family. Monomer.

The protein localises to the cytoplasm. The catalysed reaction is AMP + ATP = 2 ADP. It functions in the pathway purine metabolism; AMP biosynthesis via salvage pathway; AMP from ADP: step 1/1. In terms of biological role, catalyzes the reversible transfer of the terminal phosphate group between ATP and AMP. Plays an important role in cellular energy homeostasis and in adenine nucleotide metabolism. The chain is Adenylate kinase from Chlamydia trachomatis serovar A (strain ATCC VR-571B / DSM 19440 / HAR-13).